Here is a 594-residue protein sequence, read N- to C-terminus: UvrABC system protein C (594 aa).

Residues 15–92 (DKPGCYQMKN…IQKFQPYYNI (78 aa)) enclose the GIY-YIG domain. The region spanning 197 to 232 (AKIKQSLQTKMQKASEAMEFERAADIRDQIHYIEVT) is the UVR domain.

It belongs to the UvrC family. As to quaternary structure, interacts with UvrB in an incision complex.

Its subcellular location is the cytoplasm. Its function is as follows. The UvrABC repair system catalyzes the recognition and processing of DNA lesions. UvrC both incises the 5' and 3' sides of the lesion. The N-terminal half is responsible for the 3' incision and the C-terminal half is responsible for the 5' incision. This chain is UvrABC system protein C, found in Pediococcus pentosaceus (strain ATCC 25745 / CCUG 21536 / LMG 10740 / 183-1w).